A 544-amino-acid polypeptide reads, in one-letter code: NADP-dependent malic enzyme (544 aa).

Residues 1-22 (MQNKPSFILRNPSANKGTGFNN) form a disordered region. The segment covering 12–21 (PSANKGTGFN) has biased composition (polar residues). Tyrosine 92 serves as the catalytic Proton donor. Arginine 145 lines the NAD(+) pocket. The Proton acceptor role is filled by lysine 163. Positions 234, 235, and 258 each coordinate a divalent metal cation. Aspartate 258 provides a ligand contact to NAD(+). 287–303 (VFLGAGSAGIGVADCIM) is a binding site for NADP(+). Asparagine 400 lines the NAD(+) pocket.

This sequence belongs to the malic enzymes family. As to quaternary structure, homotetramer. Mg(2+) is required as a cofactor. The cofactor is Mn(2+). In terms of tissue distribution, expressed in the fruiting body.

The protein resides in the cytoplasm. It carries out the reaction (S)-malate + NADP(+) = pyruvate + CO2 + NADPH. The enzyme catalyses oxaloacetate + H(+) = pyruvate + CO2. The chain is NADP-dependent malic enzyme (malA) from Dictyostelium discoideum (Social amoeba).